The following is a 253-amino-acid chain: Flap endonuclease Xni (253 aa).

Mg(2+) is bound at residue aspartate 105. One can recognise a 5'-3' exonuclease domain in the interval 162–251 (ERHQLLDYIA…HLKLSDLRVN (90 aa)). The K(+) site is built by leucine 172, proline 181, isoleucine 183, and isoleucine 186. Residues 185–190 (GIGPKS) are interaction with DNA.

Belongs to the Xni family. The cofactor is Mg(2+). It depends on K(+) as a cofactor.

Has flap endonuclease activity. During DNA replication, flap endonucleases cleave the 5'-overhanging flap structure that is generated by displacement synthesis when DNA polymerase encounters the 5'-end of a downstream Okazaki fragment. The polypeptide is Flap endonuclease Xni (Shewanella amazonensis (strain ATCC BAA-1098 / SB2B)).